Here is a 242-residue protein sequence, read N- to C-terminus: Probable transcriptional regulatory protein Bphy_2064 (242 aa).

The protein belongs to the TACO1 family.

It localises to the cytoplasm. This is Probable transcriptional regulatory protein Bphy_2064 from Paraburkholderia phymatum (strain DSM 17167 / CIP 108236 / LMG 21445 / STM815) (Burkholderia phymatum).